A 129-amino-acid chain; its full sequence is Small ribosomal subunit protein uS11 (129 aa).

The protein belongs to the universal ribosomal protein uS11 family. As to quaternary structure, part of the 30S ribosomal subunit. Interacts with proteins S7 and S18. Binds to IF-3.

Functionally, located on the platform of the 30S subunit, it bridges several disparate RNA helices of the 16S rRNA. Forms part of the Shine-Dalgarno cleft in the 70S ribosome. This is Small ribosomal subunit protein uS11 from Baumannia cicadellinicola subsp. Homalodisca coagulata.